Here is a 269-residue protein sequence, read N- to C-terminus: Energy-coupling factor transporter ATP-binding protein EcfA1 (269 aa).

The 235-residue stretch at 8–242 folds into the ABC transporter domain; it reads IVFKNVSFQY…AEELTRIGLD (235 aa). 42–49 serves as a coordination point for ATP; it reads GHNGSGKS.

This sequence belongs to the ABC transporter superfamily. Energy-coupling factor EcfA family. In terms of assembly, forms a stable energy-coupling factor (ECF) transporter complex composed of 2 membrane-embedded substrate-binding proteins (S component), 2 ATP-binding proteins (A component) and 2 transmembrane proteins (T component).

It is found in the cell membrane. ATP-binding (A) component of a common energy-coupling factor (ECF) ABC-transporter complex. Unlike classic ABC transporters this ECF transporter provides the energy necessary to transport a number of different substrates. The polypeptide is Energy-coupling factor transporter ATP-binding protein EcfA1 (Staphylococcus aureus (strain Mu50 / ATCC 700699)).